A 245-amino-acid chain; its full sequence is tRNA pseudouridine synthase A (245 aa).

The Nucleophile role is filled by Asp-52. Tyr-110 serves as a coordination point for substrate.

Belongs to the tRNA pseudouridine synthase TruA family. Homodimer.

The catalysed reaction is uridine(38/39/40) in tRNA = pseudouridine(38/39/40) in tRNA. Functionally, formation of pseudouridine at positions 38, 39 and 40 in the anticodon stem and loop of transfer RNAs. The polypeptide is tRNA pseudouridine synthase A (Borrelia turicatae (strain 91E135)).